Reading from the N-terminus, the 358-residue chain is Alanine racemase (358 aa).

Lysine 35 serves as the catalytic Proton acceptor; specific for D-alanine. Lysine 35 is modified (N6-(pyridoxal phosphate)lysine). Arginine 130 contacts substrate. Tyrosine 255 (proton acceptor; specific for L-alanine) is an active-site residue. Residue methionine 303 participates in substrate binding.

Belongs to the alanine racemase family. Requires pyridoxal 5'-phosphate as cofactor.

The catalysed reaction is L-alanine = D-alanine. It functions in the pathway amino-acid biosynthesis; D-alanine biosynthesis; D-alanine from L-alanine: step 1/1. Its function is as follows. Catalyzes the interconversion of L-alanine and D-alanine. May also act on other amino acids. This chain is Alanine racemase (alr), found in Shewanella loihica (strain ATCC BAA-1088 / PV-4).